A 398-amino-acid polypeptide reads, in one-letter code: UPF0229 protein Ccel_0490 (398 aa).

Disordered stretches follow at residues 1–22 and 68–104; these read MAIF…RRRH and KSKP…NSEG. Basic and acidic residues-rich tracts occupy residues 11 to 22 and 78 to 95; these read GKDRSAEDRRRH and GNEK…EGKG.

It belongs to the UPF0229 family.

In Ruminiclostridium cellulolyticum (strain ATCC 35319 / DSM 5812 / JCM 6584 / H10) (Clostridium cellulolyticum), this protein is UPF0229 protein Ccel_0490.